Reading from the N-terminus, the 469-residue chain is Tubulin gamma-1 chain (469 aa).

142–148 is a binding site for GTP; the sequence is AGGTGSG.

The protein belongs to the tubulin family.

Its subcellular location is the cytoplasm. The protein resides in the cytoskeleton. It localises to the microtubule organizing center. Functionally, tubulin is the major constituent of microtubules. The gamma chain is found at microtubule organizing centers (MTOC) such as the spindle poles, suggesting that it is involved in the minus-end nucleation of microtubule assembly. The polypeptide is Tubulin gamma-1 chain (TUBG1) (Zea mays (Maize)).